Reading from the N-terminus, the 899-residue chain is Origin recognition complex subunit 5 (899 aa).

Disordered regions lie at residues 27-47, 100-166, and 194-238; these read FSSP…NDDT, DRIN…EYKD, and KNLE…DGNL. Positions 105-160 are enriched in acidic residues; it reads SEEETNINDDNNDDNNGDYDDDNNSDDDDDNDDNNNNDDNNNDDDEDVDDFEDIKE. Over residues 207 to 218 the composition is skewed to low complexity; it reads SSDNSMTSSSEE. Positions 227 to 237 are enriched in basic and acidic residues; the sequence is ESDKESDKDGN. An ATP-binding site is contributed by 303 to 310; it reads GLPGMGKT. Positions 409–469 are disordered; the sequence is KRTTENIRSP…NNNSNNVRFN (61 aa). The span at 455–469 shows a compositional bias: low complexity; it reads KNNFNNNNSNNVRFN.

This sequence belongs to the ORC5 family. As to quaternary structure, component of the origin recognition complex (ORC). Interacts with PCNA1; the interaction occurs during the trophozoite stage but not at the late schizont stage.

Its subcellular location is the nucleus. It carries out the reaction ATP + H2O = ADP + phosphate + H(+). In terms of biological role, component of the origin recognition complex (ORC) that binds origins of replication. This Plasmodium falciparum (isolate 3D7) protein is Origin recognition complex subunit 5.